The primary structure comprises 472 residues: 4-O-methyl-glucuronoyl methylesterase 1 (472 aa).

Residues 1-20 (MKSAAYLAALAAVLPAYVNA) form the signal peptide. One can recognise a CBM1 domain in the interval 21-56 (QAQEWGQCGGIGWTGATTCVSGTVCTVLNPYYSQCL). Positions 62 to 97 (TAPPPPPPPPTSVSSSSSSSTSSAPPSGPSGTSPTC) are disordered. The segment covering 63 to 72 (APPPPPPPPT) has biased composition (pro residues). A compositionally biased stretch (low complexity) spans 73 to 96 (SVSSSSSSSTSSAPPSGPSGTSPT). 3 cysteine pairs are disulfide-bonded: Cys-97–Cys-131, Cys-283–Cys-419, and Cys-315–Cys-391. Positions 282 to 287 (GCSRDG) match the GXSYXG catalytic site motif motif. Residue Ser-284 is the Nucleophile of the active site. 4 residues coordinate substrate: Lys-288, Gln-330, Glu-338, and Trp-382. The active-site Proton donor/acceptor is the His-418. Asn-465 is a glycosylation site (N-linked (GlcNAc...) asparagine).

It belongs to the carbohydrate esterase 15 (CE15) family.

It is found in the secreted. It carries out the reaction a 4-O-methyl-alpha-D-glucuronosyl ester derivative + H2O = 4-O-methyl-alpha-D-glucuronate derivative + an alcohol + H(+). In terms of biological role, glucuronoyl esterase which may play a significant role in biomass degradation, as it is considered to disconnect hemicellulose from lignin through the hydrolysis of the ester bond between 4-O-methyl-D-glucuronic acid residues of glucuronoxylans and aromatic alcohols of lignin. Can hydrolyze benzyl glucuronic acid (BnGlcA), allyl glucuronic acid (allylGlcA) and to a lower degree methyl glucuronic acid (MeGlcA) in vitro. In Phanerochaete chrysosporium (strain RP-78 / ATCC MYA-4764 / FGSC 9002) (White-rot fungus), this protein is 4-O-methyl-glucuronoyl methylesterase 1.